The following is a 1025-amino-acid chain: Beta-galactosidase (1025 aa).

Asn105 and Asp204 together coordinate substrate. Asp204 provides a ligand contact to Na(+). The Mg(2+) site is built by Glu417, His419, and Glu462. Residues Glu462 and 538 to 541 contribute to the substrate site; that span reads EYAH. The Proton donor role is filled by Glu462. Glu538 acts as the Nucleophile in catalysis. Asn598 contacts Mg(2+). Positions 602 and 605 each coordinate Na(+). Residues Asn605 and Trp1003 each contribute to the substrate site.

Belongs to the glycosyl hydrolase 2 family. In terms of assembly, homotetramer. Requires Mg(2+) as cofactor. Na(+) serves as cofactor.

It catalyses the reaction Hydrolysis of terminal non-reducing beta-D-galactose residues in beta-D-galactosides.. The polypeptide is Beta-galactosidase (Aeromonas hydrophila subsp. hydrophila (strain ATCC 7966 / DSM 30187 / BCRC 13018 / CCUG 14551 / JCM 1027 / KCTC 2358 / NCIMB 9240 / NCTC 8049)).